The chain runs to 382 residues: Apolipoprotein A-IV (382 aa).

The N-terminal stretch at 1–20 (MFLKAVVLSLALVAVTGARA) is a signal peptide. 13 repeat units span residues 33–54 (DYFSQLGSNAKKAVEHLQKSEL), 60–81 (TLFQDKLGEVNTYTEDLQKKLV), 82–103 (PFATELHERLTKDSEKLKEEIR), 115–136 (PHATEVSQKIGDNVRELQQRLG), 137–158 (PFTGGLRTQVNTQVQQLQRQLK), 159–180 (PYAERMESVLRQNIRNLEASVA), 181–202 (PYADEFKAKIDQNVEELKGSLT), 203–224 (PYAEELKAKIDQNVEELRRSLA), 225–246 (PYAQDVQEKLNHQLEGLAFQMK), 247–268 (KQAEELKAKISANADELRQKLV), 269–286 (PVAENVHGHLKGNTEGLQ), 287–308 (KSLLELRSHLDQQVEEFRLKVE), and 309–330 (PYGETFNKALVQQVEDLRQKLG). The 13 X 22 AA approximate tandem repeats stretch occupies residues 33–330 (DYFSQLGSNA…QVEDLRQKLG (298 aa)). A disordered region spans residues 361-382 (EASQGQSQALPAQEKAQAPLEG).

Belongs to the apolipoprotein A1/A4/E family. In terms of assembly, homodimer. In terms of tissue distribution, secreted in plasma.

The protein localises to the secreted. May have a role in chylomicrons and VLDL secretion and catabolism. Required for efficient activation of lipoprotein lipase by ApoC-II; potent activator of LCAT. Apoa-IV is a major component of HDL and chylomicrons. The chain is Apolipoprotein A-IV (APOA4) from Sus scrofa (Pig).